The sequence spans 526 residues: Phosphoenolpyruvate carboxykinase (ATP) (526 aa).

Arg55, Tyr190, and Lys196 together coordinate substrate. ATP is bound by residues Lys196, His215, and 231 to 239; that span reads GLSGTGKTT. Mn(2+)-binding residues include Lys196 and His215. Asp252 is a Mn(2+) binding site. ATP is bound by residues Glu280, Arg317, and Thr442. Arg317 contacts substrate.

Belongs to the phosphoenolpyruvate carboxykinase (ATP) family. Requires Mn(2+) as cofactor.

Its subcellular location is the cytoplasm. It catalyses the reaction oxaloacetate + ATP = phosphoenolpyruvate + ADP + CO2. It functions in the pathway carbohydrate biosynthesis; gluconeogenesis. Its function is as follows. Involved in the gluconeogenesis. Catalyzes the conversion of oxaloacetate (OAA) to phosphoenolpyruvate (PEP) through direct phosphoryl transfer between the nucleoside triphosphate and OAA. In Alkaliphilus oremlandii (strain OhILAs) (Clostridium oremlandii (strain OhILAs)), this protein is Phosphoenolpyruvate carboxykinase (ATP).